Here is a 571-residue protein sequence, read N- to C-terminus: PR domain zinc finger protein 14 (571 aa).

The residue at position 79 (serine 79) is a Phosphoserine. The interval 129-191 is disordered; the sequence is LGHQIIGGDN…PKPSNQEGKS (63 aa). Positions 165–176 are enriched in polar residues; that stretch reads RTSQLLPCSPSK. The interaction with CBFA2T2 stretch occupies residues 194–384; the sequence is RFQFTEEDLH…DIPVSLQVTE (191 aa). An SET domain is found at 251 to 367; it reads EGLCLMQTVF…QNQELLVWYG (117 aa). A C2H2-type 1; atypical zinc finger spans residues 400-424; the sequence is YRCERCGKVFTYKYYRDKHLKYTPC. 5 consecutive C2H2-type zinc fingers follow at residues 432–455, 461–483, 489–511, 517–540, and 546–568; these read FPCSLCKRSFEKRDRLRIHILHVH, HKCSTCGKCFSQSSSLNKHMRVH, YQCVYCTKRFTASSILRTHIRQH, FKCKYCGKSFASHAAHDSHVRRSH, and CSCSICGKIFSDQETFYSHMKFH.

It belongs to the class V-like SAM-binding methyltransferase superfamily. In terms of assembly, interacts with CBFA2T2. Expressed in embryonic stem cells. Tends to be overexpressed in breast cancer (at protein level).

Its subcellular location is the nucleus. In terms of biological role, transcription factor that has both positive and negative roles on transcription. Required for the maintenance of embryonic stem cell identity and the reacquisition of pluripotency in somatic cells. May play an essential role in germ cell development at 2 levels: the reacquisition of potential pluripotency, including SOX2 up-regulation, and successful epigenetic reprogramming, characterized by EHMT1 repression. Its association with CBFA2T2 is required for the functions in pluripotency and germ cell formation. Directly up-regulates the expression of pluripotency gene POU5F1 through its proximal enhancer. Binds to the DNA consensus sequence 5'-GGTC[TC]CTAA-3'. In Homo sapiens (Human), this protein is PR domain zinc finger protein 14 (PRDM14).